The sequence spans 294 residues: tRNA pseudouridine synthase B (294 aa).

The active-site Nucleophile is Asp-39.

The protein belongs to the pseudouridine synthase TruB family. Type 1 subfamily.

It carries out the reaction uridine(55) in tRNA = pseudouridine(55) in tRNA. Responsible for synthesis of pseudouridine from uracil-55 in the psi GC loop of transfer RNAs. The chain is tRNA pseudouridine synthase B from Streptococcus pyogenes serotype M5 (strain Manfredo).